Here is a 288-residue protein sequence, read N- to C-terminus: Elongation factor Ts (288 aa).

The tract at residues 82–85 (TDFV) is involved in Mg(2+) ion dislocation from EF-Tu.

This sequence belongs to the EF-Ts family.

The protein resides in the cytoplasm. In terms of biological role, associates with the EF-Tu.GDP complex and induces the exchange of GDP to GTP. It remains bound to the aminoacyl-tRNA.EF-Tu.GTP complex up to the GTP hydrolysis stage on the ribosome. The chain is Elongation factor Ts from Chlorobium chlorochromatii (strain CaD3).